Reading from the N-terminus, the 98-residue chain is Integration host factor subunit alpha (98 aa).

The disordered stretch occupies residues 49–70 (FGNFDLRDKNQRPGRNPKTGED).

The protein belongs to the bacterial histone-like protein family. As to quaternary structure, heterodimer of an alpha and a beta chain.

In terms of biological role, this protein is one of the two subunits of integration host factor, a specific DNA-binding protein that functions in genetic recombination as well as in transcriptional and translational control. In Shewanella baltica (strain OS223), this protein is Integration host factor subunit alpha.